A 455-amino-acid polypeptide reads, in one-letter code: Bifunctional protein GlmU (455 aa).

A pyrophosphorylase region spans residues 1–229 (MSKKVMSVVI…LNEIEGINDG (229 aa)). UDP-N-acetyl-alpha-D-glucosamine contacts are provided by residues 11-14 (LAAG), Lys25, Gln76, 81-82 (GT), 103-105 (YGD), Gly140, Glu154, Asn169, and Asn227. Position 105 (Asp105) interacts with Mg(2+). A Mg(2+)-binding site is contributed by Asn227. The tract at residues 230–250 (LQLARLERLFQKQQAEKLLLS) is linker. The interval 251 to 455 (GVRILDPARF…IQGWKRPKKT (205 aa)) is N-acetyltransferase. Residues Arg333 and Lys351 each contribute to the UDP-N-acetyl-alpha-D-glucosamine site. The Proton acceptor role is filled by His363. 2 residues coordinate UDP-N-acetyl-alpha-D-glucosamine: Tyr366 and Asn377. Acetyl-CoA-binding positions include Ala380, 386-387 (NY), Ser405, Ala423, and Arg440.

This sequence in the N-terminal section; belongs to the N-acetylglucosamine-1-phosphate uridyltransferase family. The protein in the C-terminal section; belongs to the transferase hexapeptide repeat family. As to quaternary structure, homotrimer. Mg(2+) is required as a cofactor.

The protein resides in the cytoplasm. The catalysed reaction is alpha-D-glucosamine 1-phosphate + acetyl-CoA = N-acetyl-alpha-D-glucosamine 1-phosphate + CoA + H(+). It catalyses the reaction N-acetyl-alpha-D-glucosamine 1-phosphate + UTP + H(+) = UDP-N-acetyl-alpha-D-glucosamine + diphosphate. It participates in nucleotide-sugar biosynthesis; UDP-N-acetyl-alpha-D-glucosamine biosynthesis; N-acetyl-alpha-D-glucosamine 1-phosphate from alpha-D-glucosamine 6-phosphate (route II): step 2/2. It functions in the pathway nucleotide-sugar biosynthesis; UDP-N-acetyl-alpha-D-glucosamine biosynthesis; UDP-N-acetyl-alpha-D-glucosamine from N-acetyl-alpha-D-glucosamine 1-phosphate: step 1/1. Its pathway is bacterial outer membrane biogenesis; LPS lipid A biosynthesis. Catalyzes the last two sequential reactions in the de novo biosynthetic pathway for UDP-N-acetylglucosamine (UDP-GlcNAc). The C-terminal domain catalyzes the transfer of acetyl group from acetyl coenzyme A to glucosamine-1-phosphate (GlcN-1-P) to produce N-acetylglucosamine-1-phosphate (GlcNAc-1-P), which is converted into UDP-GlcNAc by the transfer of uridine 5-monophosphate (from uridine 5-triphosphate), a reaction catalyzed by the N-terminal domain. The polypeptide is Bifunctional protein GlmU (Hamiltonella defensa subsp. Acyrthosiphon pisum (strain 5AT)).